The chain runs to 203 residues: Lipoprotein MlpJ (203 aa).

The signal sequence occupies residues 1–17 (MKIINILFCISLLLLNS). A lipid anchor (N-palmitoyl cysteine) is attached at cysteine 18. Cysteine 18 carries the S-diacylglycerol cysteine lipid modification. Positions 26–47 (LKNNAQQTKSRKKRDLSQEELP) are disordered.

This sequence belongs to the Multicopy lipoprotein (Mlp) family.

Its subcellular location is the cell outer membrane. An outer membrane protein that may participate in pathogenesis. Some human Lyme disease patients have antibodies against this protein. The Mlp proteins probably undergo intragenic recombination, generating new alleles. This chain is Lipoprotein MlpJ, found in Borreliella burgdorferi (strain ATCC 35210 / DSM 4680 / CIP 102532 / B31) (Borrelia burgdorferi).